The primary structure comprises 356 residues: Tyrosine recombinase XerS (356 aa).

Positions 16 to 121 (LMPWYVLEYY…ALSSLYKYLT (106 aa)) constitute a Core-binding (CB) domain. Positions 169 to 354 (GFLTYIDQEH…VNDEQKNALD (186 aa)) constitute a Tyr recombinase domain. Residues R210, K234, H306, R309, and H332 contribute to the active site. The active-site O-(3'-phospho-DNA)-tyrosine intermediate is the Y341.

It belongs to the 'phage' integrase family. XerS subfamily.

Its subcellular location is the cytoplasm. Its activity is regulated as follows. FtsK is required for recombination. In terms of biological role, site-specific tyrosine recombinase, which acts by catalyzing the cutting and rejoining of the recombining DNA molecules. Essential to convert dimers of the bacterial chromosome into monomers to permit their segregation at cell division. This is Tyrosine recombinase XerS from Streptococcus pneumoniae (strain P1031).